Here is a 298-residue protein sequence, read N- to C-terminus: Replication protein A 32 kDa subunit B (298 aa).

Residues 89–163 constitute a DNA-binding region (OB); the sequence is VRLVGRMLNK…QVVAYSVRRI (75 aa).

Belongs to the replication factor A protein 2 family. In terms of assembly, heterotrimer of RPA1, RPA2 and RPA3 (canonical replication protein A complex). Interacts with RPA1A and RPA3. Phosphorylated in a cell-cycle-dependent manner (from the S phase until mitosis). In response to DNA damage, recruited to DNA-repair nuclear foci, as a hypophosphorylated form.

Its subcellular location is the nucleus. Component of the replication protein A complex (RPA) required for DNA recombination, repair and replication. The activity of RPA is mediated by single-stranded DNA binding and protein interactions. The protein is Replication protein A 32 kDa subunit B (RPA2B) of Oryza sativa subsp. japonica (Rice).